We begin with the raw amino-acid sequence, 281 residues long: Large ribosomal subunit protein uL2 (281 aa).

Residues 223–281 (VRGSVMNPVDHPHGGGEGKQPVGRKSPLTPWGKIALGVKTRKTKKSSNKLILRRRKDAK) are disordered. Residues 261–281 (KTRKTKKSSNKLILRRRKDAK) are compositionally biased toward basic residues.

This sequence belongs to the universal ribosomal protein uL2 family. As to quaternary structure, part of the 50S ribosomal subunit. Forms a bridge to the 30S subunit in the 70S ribosome.

Functionally, one of the primary rRNA binding proteins. Required for association of the 30S and 50S subunits to form the 70S ribosome, for tRNA binding and peptide bond formation. It has been suggested to have peptidyltransferase activity; this is somewhat controversial. Makes several contacts with the 16S rRNA in the 70S ribosome. The polypeptide is Large ribosomal subunit protein uL2 (Mycoplasmopsis synoviae (strain 53) (Mycoplasma synoviae)).